Reading from the N-terminus, the 75-residue chain is uncharacterized protein (75 aa).

The helical transmembrane segment at 49-69 (VDIVAVATTLPFIVAVICIVF) threads the bilayer.

The protein localises to the host membrane. This is an uncharacterized protein from Saccharolobus islandicus (Sulfolobus islandicus).